The sequence spans 341 residues: Methionine import ATP-binding protein MetN (341 aa).

The ABC transporter domain maps to 2 to 241; the sequence is IELNQVVKRY…PQHEVTRRFV (240 aa). 38 to 45 contributes to the ATP binding site; the sequence is GFSGAGKS.

The protein belongs to the ABC transporter superfamily. Methionine importer (TC 3.A.1.24) family. In terms of assembly, the complex is composed of two ATP-binding proteins (MetN), two transmembrane proteins (MetI) and a solute-binding protein (MetQ).

It localises to the cell membrane. The catalysed reaction is L-methionine(out) + ATP + H2O = L-methionine(in) + ADP + phosphate + H(+). It catalyses the reaction D-methionine(out) + ATP + H2O = D-methionine(in) + ADP + phosphate + H(+). Functionally, part of the ABC transporter complex MetNIQ involved in methionine import. Responsible for energy coupling to the transport system. This is Methionine import ATP-binding protein MetN from Staphylococcus haemolyticus (strain JCSC1435).